We begin with the raw amino-acid sequence, 131 residues long: Profilin-3 (131 aa).

The protein belongs to the profilin family. In terms of assembly, occurs in many kinds of cells as a complex with monomeric actin in a 1:1 ratio.

The protein localises to the cytoplasm. It is found in the cytoskeleton. In terms of biological role, binds to actin and affects the structure of the cytoskeleton. At high concentrations, profilin prevents the polymerization of actin, whereas it enhances it at low concentrations. By binding to PIP2, it inhibits the formation of IP3 and DG. The polypeptide is Profilin-3 (Malus domestica (Apple)).